A 123-amino-acid chain; its full sequence is Large ribosomal subunit protein bL17 (123 aa).

Belongs to the bacterial ribosomal protein bL17 family. In terms of assembly, part of the 50S ribosomal subunit. Contacts protein L32.

This Dichelobacter nodosus (strain VCS1703A) protein is Large ribosomal subunit protein bL17.